Reading from the N-terminus, the 912-residue chain is Protein translocase subunit SecA (912 aa).

ATP contacts are provided by residues Q86, 104 to 108, and D494; that span reads GEGKT. Positions 860 to 912 are disordered; that stretch reads EAPEKPAQLQYTAPGEDGASQTRVEGRSSGRSGNPAKAAQDGARKPAPKKKKR.

Belongs to the SecA family. Monomer and homodimer. Part of the essential Sec protein translocation apparatus which comprises SecA, SecYEG and auxiliary proteins SecDF. Other proteins may also be involved.

The protein localises to the cell membrane. It localises to the cytoplasm. The enzyme catalyses ATP + H2O + cellular proteinSide 1 = ADP + phosphate + cellular proteinSide 2.. Functionally, part of the Sec protein translocase complex. Interacts with the SecYEG preprotein conducting channel. Has a central role in coupling the hydrolysis of ATP to the transfer of proteins into and across the cell membrane, serving as an ATP-driven molecular motor driving the stepwise translocation of polypeptide chains across the membrane. The sequence is that of Protein translocase subunit SecA from Arthrobacter sp. (strain FB24).